The sequence spans 351 residues: N-acetyl-gamma-glutamyl-phosphate reductase (351 aa).

Residue Cys154 is part of the active site.

This sequence belongs to the NAGSA dehydrogenase family. Type 1 subfamily.

The protein localises to the cytoplasm. The enzyme catalyses N-acetyl-L-glutamate 5-semialdehyde + phosphate + NADP(+) = N-acetyl-L-glutamyl 5-phosphate + NADPH + H(+). It functions in the pathway amino-acid biosynthesis; L-arginine biosynthesis; N(2)-acetyl-L-ornithine from L-glutamate: step 3/4. Its function is as follows. Catalyzes the NADPH-dependent reduction of N-acetyl-5-glutamyl phosphate to yield N-acetyl-L-glutamate 5-semialdehyde. The chain is N-acetyl-gamma-glutamyl-phosphate reductase from Prochlorococcus marinus subsp. pastoris (strain CCMP1986 / NIES-2087 / MED4).